A 131-amino-acid polypeptide reads, in one-letter code: Translation initiation factor 5A (131 aa).

Hypusine is present on Lys37.

The protein belongs to the eIF-5A family.

The protein localises to the cytoplasm. Its function is as follows. Functions by promoting the formation of the first peptide bond. The polypeptide is Translation initiation factor 5A (eIF5A) (Methanococcus maripaludis (strain C6 / ATCC BAA-1332)).